Reading from the N-terminus, the 122-residue chain is Large ribosomal subunit protein uL14 (122 aa).

The protein belongs to the universal ribosomal protein uL14 family. As to quaternary structure, part of the 50S ribosomal subunit. Forms a cluster with proteins L3 and L19. In the 70S ribosome, L14 and L19 interact and together make contacts with the 16S rRNA in bridges B5 and B8.

Its function is as follows. Binds to 23S rRNA. Forms part of two intersubunit bridges in the 70S ribosome. The chain is Large ribosomal subunit protein uL14 from Carsonella ruddii (strain PV).